We begin with the raw amino-acid sequence, 131 residues long: Transcription antitermination protein NusB (131 aa).

Belongs to the NusB family.

Functionally, involved in transcription antitermination. Required for transcription of ribosomal RNA (rRNA) genes. Binds specifically to the boxA antiterminator sequence of the ribosomal RNA (rrn) operons. This is Transcription antitermination protein NusB from Aliarcobacter butzleri (strain RM4018) (Arcobacter butzleri).